We begin with the raw amino-acid sequence, 363 residues long: Protein-arginine kinase (363 aa).

The 232-residue stretch at 24–255 (IVLSSRIRLA…EQLIAQERAA (232 aa)) folds into the Phosphagen kinase C-terminal domain. ATP is bound by residues 27–31 (SSRIR), H92, R126, 177–181 (RASVM), and 208–213 (RGTYGE). Positions 338-343 (RDVRRA) match the RDXXRA motif of the pArg binding pocket involved in allosteric regulation motif.

It belongs to the ATP:guanido phosphotransferase family. As to quaternary structure, homodimer. Dimerization is important for full catalytic activity.

The catalysed reaction is L-arginyl-[protein] + ATP = N(omega)-phospho-L-arginyl-[protein] + ADP + H(+). Appears to be allosterically activated by the binding of pArg-containing polypeptides to the pArg-binding pocket localized in the C-terminal domain of McsB. Catalyzes the specific phosphorylation of arginine residues in a large number of proteins. Is part of the bacterial stress response system, where it is involved in regulating the global heat shock repressor CtsR; phosphorylates arginine residues in the winged helix-turn-helix domain of CtsR, thereby preventing its binding to DNA and consequently inducing the expression of repressed genes. Protein arginine phosphorylation has a physiologically important role and is involved in the regulation of many critical cellular processes, such as protein homeostasis, motility, competence, and stringent and stress responses, by regulating gene expression and protein activity. Acts exclusively on Arg residues, since it cannot phosphorylate Tyr, Ser, Thr, His, Asp and Lys. Has no free arginine kinase activity. The polypeptide is Protein-arginine kinase (Geobacillus stearothermophilus (Bacillus stearothermophilus)).